Consider the following 28-residue polypeptide: Apolipoprotein C-I (28 aa).

Belongs to the apolipoprotein C1 family.

It localises to the secreted. Its function is as follows. Inhibitor of lipoprotein binding to the low density lipoprotein (LDL) receptor, LDL receptor-related protein, and very low density lipoprotein (VLDL) receptor. Associates with high density lipoproteins (HDL) and the triacylglycerol-rich lipoproteins in the plasma and makes up about 10% of the protein of the VLDL and 2% of that of HDL. Appears to interfere directly with fatty acid uptake and is also the major plasma inhibitor of cholesteryl ester transfer protein (CETP). Binds free fatty acids and reduces their intracellular esterification. Modulates the interaction of APOE with beta-migrating VLDL and inhibits binding of beta-VLDL to the LDL receptor-related protein. This Oryctolagus cuniculus (Rabbit) protein is Apolipoprotein C-I (APOC1).